The chain runs to 162 residues: 3-isopropylmalate dehydratase small subunit (162 aa).

The protein belongs to the LeuD family. LeuD type 2 subfamily. In terms of assembly, heterodimer of LeuC and LeuD.

It carries out the reaction (2R,3S)-3-isopropylmalate = (2S)-2-isopropylmalate. It functions in the pathway amino-acid biosynthesis; L-leucine biosynthesis; L-leucine from 3-methyl-2-oxobutanoate: step 2/4. Its function is as follows. Catalyzes the isomerization between 2-isopropylmalate and 3-isopropylmalate, via the formation of 2-isopropylmaleate. This is 3-isopropylmalate dehydratase small subunit from Pyrobaculum neutrophilum (strain DSM 2338 / JCM 9278 / NBRC 100436 / V24Sta) (Thermoproteus neutrophilus).